A 380-amino-acid chain; its full sequence is 3-isopropylmalate dehydratase large subunit (380 aa).

Residues C262, C320, and C323 each coordinate [4Fe-4S] cluster.

It belongs to the aconitase/IPM isomerase family. LeuC type 2 subfamily. In terms of assembly, heterodimer of LeuC and LeuD. It depends on [4Fe-4S] cluster as a cofactor.

The catalysed reaction is (2R,3S)-3-isopropylmalate = (2S)-2-isopropylmalate. Its pathway is amino-acid biosynthesis; L-leucine biosynthesis; L-leucine from 3-methyl-2-oxobutanoate: step 2/4. Functionally, catalyzes the isomerization between 2-isopropylmalate and 3-isopropylmalate, via the formation of 2-isopropylmaleate. The chain is 3-isopropylmalate dehydratase large subunit from Thermococcus kodakarensis (strain ATCC BAA-918 / JCM 12380 / KOD1) (Pyrococcus kodakaraensis (strain KOD1)).